We begin with the raw amino-acid sequence, 447 residues long: Serine/threonine-protein kinase NLK2 (447 aa).

The Protein kinase domain occupies 60–349; the sequence is PEPDRPIGYG…AKDALAHPYL (290 aa). ATP is bound by residues 66 to 74 and lysine 89; that span reads IGYGAFGVV. Residue aspartate 186 is the Proton acceptor of the active site.

This sequence belongs to the protein kinase superfamily. CMGC Ser/Thr protein kinase family. MAP kinase subfamily. Interacts with sox11, hmgxb4/hmg2l1, rnf138/narf, stat3.1 and mef2a. The cofactor is Mg(2+). Expressed widely in the ectoderm during early gastrula stage when neural induction is taking place. Expressed in the head region of neurula stage embryos. At the end of neurulation, expression becomes localized to the nervous system, and is restricted to the central nervous system, eye and head neural crest cells by the early tadpole stages.

It is found in the nucleus. The protein resides in the cytoplasm. It carries out the reaction L-seryl-[protein] + ATP = O-phospho-L-seryl-[protein] + ADP + H(+). The enzyme catalyses L-threonyl-[protein] + ATP = O-phospho-L-threonyl-[protein] + ADP + H(+). Activated by tyrosine and threonine phosphorylation. Its function is as follows. Negatively regulates Wnt/beta-catenin-signaling during development. Plays a role together with sox11 in neural induction during early embryogenesis. Involved in TGFbeta-mediated mesoderm induction in early embryos, acting downstream of map3k7/tak1 to phosphorylate stat3.1. Augments the rnf138/narf-directed ubiquitination and degradation of tcf/lef by enhancing the association of rnf138/narf and tcf/lef. Phosphorylates mef2a to play a role in anterior neural development, including eye formation. This is Serine/threonine-protein kinase NLK2 (nlk.2) from Xenopus laevis (African clawed frog).